The following is a 370-amino-acid chain: 3-isopropylmalate dehydrogenase (370 aa).

Residue 77–90 (GPKWDSVPYEVRPE) coordinates NAD(+). 4 residues coordinate substrate: R97, R107, R135, and D226. Residues D226, D250, and D254 each coordinate Mg(2+). 290-302 (GSAPDIAGQGLAN) lines the NAD(+) pocket.

The protein belongs to the isocitrate and isopropylmalate dehydrogenases family. LeuB type 1 subfamily. Homodimer. The cofactor is Mg(2+). Mn(2+) is required as a cofactor.

It is found in the cytoplasm. It catalyses the reaction (2R,3S)-3-isopropylmalate + NAD(+) = 4-methyl-2-oxopentanoate + CO2 + NADH. It functions in the pathway amino-acid biosynthesis; L-leucine biosynthesis; L-leucine from 3-methyl-2-oxobutanoate: step 3/4. In terms of biological role, catalyzes the oxidation of 3-carboxy-2-hydroxy-4-methylpentanoate (3-isopropylmalate) to 3-carboxy-4-methyl-2-oxopentanoate. The product decarboxylates to 4-methyl-2 oxopentanoate. This chain is 3-isopropylmalate dehydrogenase, found in Nitrobacter winogradskyi (strain ATCC 25391 / DSM 10237 / CIP 104748 / NCIMB 11846 / Nb-255).